The chain runs to 118 residues: uncharacterized protein (118 aa).

The HTH hxlR-type domain maps to 6 to 104 (CGFEVTKEVI…WGGYYAEQEY (99 aa)).

This is an uncharacterized protein from Bacillus subtilis (strain 168).